We begin with the raw amino-acid sequence, 525 residues long: GMP synthase [glutamine-hydrolyzing] (525 aa).

Residues 8–207 enclose the Glutamine amidotransferase type-1 domain; sequence KILILDFGSQ…ALDICGCAAN (200 aa). Cys-85 acts as the Nucleophile in catalysis. Catalysis depends on residues His-181 and Glu-183. One can recognise a GMPS ATP-PPase domain in the interval 208–400; the sequence is WKPSSIIEDA…LGLPYNMLYR (193 aa). 235–241 provides a ligand contact to ATP; the sequence is SGGVDSS.

Homodimer.

It carries out the reaction XMP + L-glutamine + ATP + H2O = GMP + L-glutamate + AMP + diphosphate + 2 H(+). Its pathway is purine metabolism; GMP biosynthesis; GMP from XMP (L-Gln route): step 1/1. Its function is as follows. Catalyzes the synthesis of GMP from XMP. In Shewanella baltica (strain OS155 / ATCC BAA-1091), this protein is GMP synthase [glutamine-hydrolyzing].